A 243-amino-acid polypeptide reads, in one-letter code: uncharacterized protein (243 aa).

The next 4 helical transmembrane spans lie at 38–58, 99–119, 143–163, and 204–224; these read AYFLFLLSFFVTAVMFLVGIF, FGIAILALGLFSLFLMIFLGY, FYFSVVAYCFWIALMLLFLVL, and AFATALCITLVVYELPFLGLF.

The protein resides in the cell membrane. This is an uncharacterized protein from Mycoplasma pneumoniae (strain ATCC 29342 / M129 / Subtype 1) (Mycoplasmoides pneumoniae).